Reading from the N-terminus, the 76-residue chain is Acyl carrier protein (76 aa).

Positions 1–76 (MSVEEKISKI…DAIAYIKNKQ (76 aa)) constitute a Carrier domain. An O-(pantetheine 4'-phosphoryl)serine modification is found at S36.

This sequence belongs to the acyl carrier protein (ACP) family. In terms of processing, 4'-phosphopantetheine is transferred from CoA to a specific serine of apo-ACP by AcpS. This modification is essential for activity because fatty acids are bound in thioester linkage to the sulfhydryl of the prosthetic group.

The protein localises to the cytoplasm. It functions in the pathway lipid metabolism; fatty acid biosynthesis. Its function is as follows. Carrier of the growing fatty acid chain in fatty acid biosynthesis. This chain is Acyl carrier protein, found in Nitratidesulfovibrio vulgaris (strain DSM 19637 / Miyazaki F) (Desulfovibrio vulgaris).